Consider the following 107-residue polypeptide: Acidic phospholipase A2 braziliase-I (107 aa).

7 disulfide bridges follow: Cys26–Cys100, Cys28–Cys44, Cys43–Cys86, Cys49–Cys107, Cys50–Cys79, Cys57–Cys72, and Cys66–Cys77. Ca(2+) is bound by residues Tyr27, Gly29, and Gly31. His47 is a catalytic residue. Asp48 contributes to the Ca(2+) binding site. The active site involves Asp80.

In terms of assembly, monomer. Ca(2+) is required as a cofactor. Expressed by the venom gland.

It is found in the secreted. It carries out the reaction a 1,2-diacyl-sn-glycero-3-phosphocholine + H2O = a 1-acyl-sn-glycero-3-phosphocholine + a fatty acid + H(+). Functionally, snake venom phospholipase A2 (PLA2) that induces significant edematogenic activity. Shows mild cytotoxicity on Trypanosoma cruzi and Leishmania infantum. Also inhibits ADP- and collagen-induced platelet aggregation. Does not show myotoxic activity. The sequence is that of Acidic phospholipase A2 braziliase-I from Bothrops brazili (Brazil's lancehead).